The chain runs to 497 residues: Aldehyde dehydrogenase (497 aa).

Residue 241–246 (GSTVVG) participates in NAD(+) binding. Residue glutamate 264 is the Proton acceptor of the active site. The Nucleophile role is filled by cysteine 298.

It belongs to the aldehyde dehydrogenase family.

It localises to the cytoplasm. The enzyme catalyses an aldehyde + NAD(+) + H2O = a carboxylate + NADH + 2 H(+). It functions in the pathway alcohol metabolism; ethanol degradation; acetate from ethanol: step 2/2. This is Aldehyde dehydrogenase (ALTA10) from Alternaria alternata (Alternaria rot fungus).